A 324-amino-acid polypeptide reads, in one-letter code: Glyoxylate/hydroxypyruvate reductase B (324 aa).

Catalysis depends on residues R237 and E266. The active-site Proton donor is the H285.

It belongs to the D-isomer specific 2-hydroxyacid dehydrogenase family. GhrB subfamily. As to quaternary structure, homodimer.

The protein localises to the cytoplasm. It catalyses the reaction glycolate + NADP(+) = glyoxylate + NADPH + H(+). It carries out the reaction (R)-glycerate + NAD(+) = 3-hydroxypyruvate + NADH + H(+). The catalysed reaction is (R)-glycerate + NADP(+) = 3-hydroxypyruvate + NADPH + H(+). Functionally, catalyzes the NADPH-dependent reduction of glyoxylate and hydroxypyruvate into glycolate and glycerate, respectively. The chain is Glyoxylate/hydroxypyruvate reductase B from Escherichia coli (strain K12 / MC4100 / BW2952).